The primary structure comprises 352 residues: Protein MGF 360-9L (352 aa).

The protein belongs to the asfivirus MGF 360 family. In terms of assembly, interacts with host STAT1; this interaction mediates STAT1 degradation through apoptosis. Interacts with host STAT2; this interaction mediates STAT2 degradation through the proteasome.

It localises to the host cytoplasm. Its function is as follows. Plays a role in virus cell tropism, and may be required for efficient virus replication in macrophages. In addition, inhibits IFN-beta-induced IFN-stimulated genes (ISGs) transcription. Mechanistically, degrades host STAT1 and STAT2 through apoptosis and ubiquitin-proteasome pathways respectively. In Ornithodoros (relapsing fever ticks), this protein is Protein MGF 360-9L.